We begin with the raw amino-acid sequence, 92 residues long: UPF0728 protein (92 aa).

The protein belongs to the UPF0728 family.

This is UPF0728 protein from Branchiostoma floridae (Florida lancelet).